The chain runs to 393 residues: Formate-dependent phosphoribosylglycinamide formyltransferase (393 aa).

Residues 22-23 (EL) and Glu-82 each bind N(1)-(5-phospho-beta-D-ribosyl)glycinamide. ATP contacts are provided by residues Arg-114, Lys-155, 160–165 (SSGHGQ), 195–198 (EGFI), and Glu-203. Residues 119–308 (RLAAEELGLP…QFALHARAIL (190 aa)) form the ATP-grasp domain. Residues Glu-267 and Glu-279 each contribute to the Mg(2+) site. N(1)-(5-phospho-beta-D-ribosyl)glycinamide contacts are provided by residues Asp-286, Lys-356, and 363–364 (RR).

The protein belongs to the PurK/PurT family. Homodimer.

The catalysed reaction is N(1)-(5-phospho-beta-D-ribosyl)glycinamide + formate + ATP = N(2)-formyl-N(1)-(5-phospho-beta-D-ribosyl)glycinamide + ADP + phosphate + H(+). The protein operates within purine metabolism; IMP biosynthesis via de novo pathway; N(2)-formyl-N(1)-(5-phospho-D-ribosyl)glycinamide from N(1)-(5-phospho-D-ribosyl)glycinamide (formate route): step 1/1. In terms of biological role, involved in the de novo purine biosynthesis. Catalyzes the transfer of formate to 5-phospho-ribosyl-glycinamide (GAR), producing 5-phospho-ribosyl-N-formylglycinamide (FGAR). Formate is provided by PurU via hydrolysis of 10-formyl-tetrahydrofolate. This is Formate-dependent phosphoribosylglycinamide formyltransferase from Haemophilus ducreyi (strain 35000HP / ATCC 700724).